The following is a 396-amino-acid chain: Tryptophan synthase beta chain (396 aa).

Lys-86 carries the N6-(pyridoxal phosphate)lysine modification.

The protein belongs to the TrpB family. As to quaternary structure, tetramer of two alpha and two beta chains. Pyridoxal 5'-phosphate serves as cofactor.

The catalysed reaction is (1S,2R)-1-C-(indol-3-yl)glycerol 3-phosphate + L-serine = D-glyceraldehyde 3-phosphate + L-tryptophan + H2O. It participates in amino-acid biosynthesis; L-tryptophan biosynthesis; L-tryptophan from chorismate: step 5/5. Functionally, the beta subunit is responsible for the synthesis of L-tryptophan from indole and L-serine. The protein is Tryptophan synthase beta chain of Yersinia enterocolitica serotype O:8 / biotype 1B (strain NCTC 13174 / 8081).